The primary structure comprises 508 residues: MTISLFAIRDCLEKEDLLKEFISPEGWHLTLSDTLGQREVTALSYDSRDVTAETLFFCKGLNFKEIYLENAVKDGLEIYVSEVPYEVPAQLGIIVTDIKKAMAVLSMAFYDYPQNKLKLIGFTGTKGKTTAAYFTKYILDVATQQKTALLSTMNSTLDGKTFFKSALTTPESLDLYRMMATAVANGMTHFIMEVSSQAYKTNRVYKLFFDVGIFLNITPDHISPIEHPTFDDYFYCKRQLITHSKVIVLNHEADYFPLLKETAQQQKVPAIVYGSQPAPEVDYSFAVSSEDSLRFIVESPADALGLAGSYHLRLGGDFNKGNALSAAIASVLVGASKEECQQGIAATTVPGRMESLTNTNGATVYVDYAHNYDSLKNLLTFVREEHPDGRLIVLVGSTGDKAISRRKDFGRVLSELADVAVLTTDDPASEDPAKICQEIQAHITKEMPVYTVLDRGEAIAHALSLSTTADDAIVLAGKGADLYQKVNGVDEPYAGDFALAEAFINKKN.

UDP-N-acetyl-alpha-D-muramoyl-L-alanyl-D-glutamate is bound at residue S47. 124-130 provides a ligand contact to ATP; the sequence is GTKGKTT. Residues 168–169, S195, and R203 each bind UDP-N-acetyl-alpha-D-muramoyl-L-alanyl-D-glutamate; that span reads TT. Position 237 is an N6-carboxylysine (K237). Positions 425 to 428 match the L-lysine recognition motif motif; it reads DDPA.

This sequence belongs to the MurCDEF family. MurE subfamily. Post-translationally, carboxylation is probably crucial for Mg(2+) binding and, consequently, for the gamma-phosphate positioning of ATP.

It localises to the cytoplasm. The enzyme catalyses UDP-N-acetyl-alpha-D-muramoyl-L-alanyl-D-glutamate + L-lysine + ATP = UDP-N-acetyl-alpha-D-muramoyl-L-alanyl-gamma-D-glutamyl-L-lysine + ADP + phosphate + H(+). It participates in cell wall biogenesis; peptidoglycan biosynthesis. Its function is as follows. Catalyzes the addition of L-lysine to the nucleotide precursor UDP-N-acetylmuramoyl-L-alanyl-D-glutamate (UMAG) in the biosynthesis of bacterial cell-wall peptidoglycan. This is UDP-N-acetylmuramoyl-L-alanyl-D-glutamate--L-lysine ligase from Enterococcus faecalis (strain ATCC 700802 / V583).